The sequence spans 636 residues: Polyadenylate-binding protein 1 (636 aa).

Position 1 is an N-acetylmethionine (M1). RRM domains follow at residues 11–89 (ASLY…WSQR), 99–175 (GNIF…RFKS), 191–268 (TNVY…RAQK), and 294–370 (VNLY…LAQR). The tract at residues 166–289 (RKVFVGRFKS…FEQMKQDRIT (124 aa)) is CSDE1-binding. At K299 the chain carries N6-methyllysine. At S315 the chain carries Phosphoserine. Residue T319 is modified to Phosphothreonine. Omega-N-methylarginine occurs at positions 385, 419, 432, and 436. Omega-N-methylated arginine; by CARM1 is present on residues R455 and R460. 2 positions are modified to omega-N-methylarginine: R475 and R481. An Asymmetric dimethylarginine; alternate modification is found at R493. R493 is modified (dimethylated arginine; alternate). Omega-N-methylarginine; alternate is present on R493. An Omega-N-methylarginine modification is found at R506. Position 512 is an N6-acetyllysine (K512). An Omega-N-methylarginine modification is found at R518. Positions 542-619 (QEPLTASMLA…AVAVLQAHQA (78 aa)) constitute a PABC domain.

It belongs to the polyadenylate-binding protein type-1 family. May form homodimers. Component of a multisubunit autoregulatory ribonucleoprotein complex (ARC), at least composed of IGF2BP1, PABPC1 and CSDE1. Directly interacts with IGF2BP1. Part of a complex associated with the FOS mCRD domain and consisting of HNRPD, SYNCRIP, PAIP1 and CSDE1/UNR. Interacts with PAIP1 and PAIP2 (via the PABPC1-interacting motifs PAM1 and PAM2). Interacts with PAIP1 with a 1:1 stoichiometry and with PAIP2 with a 1:2 stoichiometry. The interaction with CSDE1 is direct and RNA-independent. Found in a mRNP complex with YBX2. Interacts with TENT2/GLD2. Identified in the spliceosome C complex. Identified in a mRNP complex, at least composed of DHX9, DDX3X, ELAVL1, HNRNPU, IGF2BP1, ILF3, PABPC1, PCBP2, PTBP2, STAU1, STAU2, SYNCRIP and YBX1. The interaction with DDX3X is direct and RNA-independent. This interaction increases in stressed cells and decreases during cell recovery. Identified in a IGF2BP1-dependent mRNP granule complex containing untranslated mRNAs. Interacts with NXF1/TAP. Interacts with PIWIL1. Interacts with AGO1, AGO2, GSPT1 and GSPT2. Interacts with LARP4B. Interacts (via the second and third RRM domains and the C-terminus) with PAIP2B (via central acidic portion and C-terminus). Forms a complex with LARP1 and SHFL. Interacts with LARP4. Interacts with ZFC3H1 in a RNase-sensitive manner. Interacts with TRIM71 (via NHL repeats) in an RNA-dependent manner. Interacts with TENT5C; the interaction has no effect on TENT5C poly(A) polymerase function. Interacts with G3BP1 and G3BP2. Interacts with ENDOV; the interaction is RNA-dependent and stimulates ENDOV activity. Interacts with UPF1; the interaction is RNA-dependent. Interacts with IGF2BP2 and IGF2BP3. May interact with SETX. Interacts with RBM46. Interacts with PAN3. In terms of processing, phosphorylated by MAPKAPK2. Post-translationally, methylated by CARM1. Arg-493 is dimethylated, probably to asymmetric dimethylarginine.

The protein localises to the cytoplasm. It is found in the stress granule. It localises to the nucleus. The protein resides in the cell projection. Its subcellular location is the lamellipodium. In terms of biological role, binds the poly(A) tail of mRNA, including that of its own transcript, and regulates processes of mRNA metabolism such as pre-mRNA splicing and mRNA stability. Its function in translational initiation regulation can either be enhanced by PAIP1 or repressed by PAIP2. Can probably bind to cytoplasmic RNA sequences other than poly(A) in vivo. Binds to N6-methyladenosine (m6A)-containing mRNAs and contributes to MYC stability by binding to m6A-containing MYC mRNAs. Involved in translationally coupled mRNA turnover. Implicated with other RNA-binding proteins in the cytoplasmic deadenylation/translational and decay interplay of the FOS mRNA mediated by the major coding-region determinant of instability (mCRD) domain. Involved in regulation of nonsense-mediated decay (NMD) of mRNAs containing premature stop codons; for the recognition of premature termination codons (PTC) and initiation of NMD a competitive interaction between UPF1 and PABPC1 with the ribosome-bound release factors is proposed. By binding to long poly(A) tails, may protect them from uridylation by ZCCHC6/ZCCHC11 and hence contribute to mRNA stability. The sequence is that of Polyadenylate-binding protein 1 (PABPC1) from Pongo abelii (Sumatran orangutan).